The following is a 514-amino-acid chain: Probable transposase for insertion sequence element IS1353 (514 aa).

Positions 172 to 216 (KGDTSLEQRHEALLRELAELESQNQRLRMENAILEKASELIKKDM) form a coiled coil. One can recognise an Integrase catalytic domain in the interval 346–510 (HASAPNTKWL…SPIEYRHAVG (165 aa)). Positions 357 and 417 each coordinate Mg(2+).

Belongs to the transposase 8 family.

Its function is as follows. Probably involved in the transposition of insertion sequence IS1353. The protein is Probable transposase for insertion sequence element IS1353 of Shigella flexneri.